We begin with the raw amino-acid sequence, 129 residues long: Probable tautomerase YrdN (129 aa).

P2 (proton acceptor; via imino nitrogen) is an active-site residue.

The protein belongs to the 4-oxalocrotonate tautomerase family.

In terms of biological role, putative target of GltR. The chain is Probable tautomerase YrdN (yrdN) from Bacillus subtilis (strain 168).